The following is a 481-amino-acid chain: MEDMLSFFSSGLHVMLVDDDTKNTRTATKTLSMLHCPVVSTHTTACAGLRTLSGDNMLDVQTVLCDVSKVVSSGFDFRRVNETEHQIPVIYLLSTTEPEQMVAGEDAEFLNHLLLKATYILRKPLDWATIALWRVVAWHRCCLEERVPGDSMDDIAAHAGAGGEDGNDDDVVVIEEPQVHFKLVRSRGSRKRQLTINVDSGSSDSADANQRKKIEHMNDAKGPVGQHVASHLQLPAQEYCTKQQKDLDERRLISSDSLFLKAIFPTLNVSPSSPLILAGGAVPTAFIPRVGMTVNIGKAPMIELPFGVPVDDFLVGETAYGGAGPSIGAPSNDAAVAYAYTGALNNNTAVGSLMAPPIDEPTFTLTDPIVGTKGEGVVHIVITSEDQNALAAVEAGAPNNAEPFMMPDQVDLEEDIMFSLESLLGLDEDMIPMEDAGGEAAEGSLNIGEGGMEIGWDLDLDDILMNNTNEFAFLDDLAWIE.

One can recognise a Response regulatory domain in the interval 13–138 (HVMLVDDDTK…TIALWRVVAW (126 aa)). Residue Asp66 is modified to 4-aspartylphosphate.

This sequence belongs to the ARR family. Type-B subfamily. Post-translationally, two-component system major event consists of a His-to-Asp phosphorelay between a sensor histidine kinase (HK) and a response regulator (RR). In plants, the His-to-Asp phosphorelay involves an additional intermediate named Histidine-containing phosphotransfer protein (HPt). This multistep phosphorelay consists of a His-Asp-His-Asp sequential transfer of a phosphate group between first a His and an Asp of the HK protein, followed by the transfer to a conserved His of the HPt protein and finally the transfer to an Asp in the receiver domain of the RR protein.

Functions as a response regulator involved in His-to-Asp phosphorelay signal transduction system. Phosphorylation of the Asp residue in the receiver domain activates the ability of the protein to promote the transcription of target genes. May directly activate some type-A response regulators in response to cytokinins. The protein is Two-component response regulator ORR32 of Oryza sativa subsp. japonica (Rice).